Reading from the N-terminus, the 526-residue chain is Vang-like protein 2 (526 aa).

A disordered region spans residues 1–95 (MDNESQYSGY…NEDLTRASKE (95 aa)). Over 1 to 109 (MDNESQYSGY…SPLECRRFAG (109 aa)) the chain is Cytoplasmic. A compositionally biased stretch (basic residues) spans 15–33 (SHSRSSRKHRDRRDRHRSK). Composition is skewed to basic and acidic residues over residues 34–43 (SRDSSSRGDK) and 58–68 (ESTRGDDRDDN). Residues 70–83 (GETTTVVTGTSEHS) are compositionally biased toward low complexity. Over residues 84 to 95 (VSNEDLTRASKE) the composition is skewed to basic and acidic residues. The helical transmembrane segment at 110-130 (PIVSGVLGLFALLTPLAFLLL) threads the bilayer. The Extracellular segment spans residues 131–148 (PQLLWRDSLEPCGTPCEG). The helical transmembrane segment at 149-169 (LYVSLAFKLLVLLISSWALFL) threads the bilayer. Topologically, residues 170-178 (RPSRSTLPR) are cytoplasmic. A helical membrane pass occupies residues 179–199 (FFVFRCLLMALVFLFVASYWL). Residues 200–215 (FYGVRVLEPRERDYRG) lie on the Extracellular side of the membrane. The helical transmembrane segment at 216–236 (IVGYAVSLVDALLFIQYLALV) threads the bilayer. Residues 237–526 (LLEVRHLRPA…VMRLQSETSV (290 aa)) lie on the Cytoplasmic side of the membrane. The PDZ-binding signature appears at 523 to 526 (ETSV).

It belongs to the Vang family. In terms of assembly, interacts with the PDZ domain of dvl2/dsh. As to expression, ubiquitously expressed at the 4-cell stage. In early somitogenesis, becomes more abundant in anterior neural tissue where expression is seen in the neural tube but not in the notochord.

It localises to the cell membrane. Its function is as follows. Plays a role in non-canonical Wnt/planar cell polarity (PCP) signaling to regulate convergent extension cell movements during gastrulation. Acts together with scrib and prickle1 and localizes prickle1 and dvl2/dsh to the plasma membrane. Has an overlapping role with kny during both convergent extension and eye development. In the eye, involved in establishing proper alignment of the anterior neural plate and midline cells expressing shha and shhb/twhh. Has indirect effects on a number of other developmental processes including notochord shape formation, neural progenitor cell morphogenesis, segregation of somites and adaxial cell development. Together with prickle1, required for the posterior (caudal) movement of branchiomotor neurons in the hindbrain independently of, and a few hours after, convergent extension. May be required for cell surface localization of fzd3 and fzd6 in the inner ear. In Danio rerio (Zebrafish), this protein is Vang-like protein 2.